A 371-amino-acid chain; its full sequence is Ferrochelatase (371 aa).

The Fe cation site is built by His-218 and Glu-299.

This sequence belongs to the ferrochelatase family.

The protein localises to the cytoplasm. The catalysed reaction is heme b + 2 H(+) = protoporphyrin IX + Fe(2+). It participates in porphyrin-containing compound metabolism; protoheme biosynthesis; protoheme from protoporphyrin-IX: step 1/1. In terms of biological role, catalyzes the ferrous insertion into protoporphyrin IX. This is Ferrochelatase from Ralstonia nicotianae (strain ATCC BAA-1114 / GMI1000) (Ralstonia solanacearum).